The chain runs to 120 residues: uncharacterized protein (120 aa).

This is an uncharacterized protein from Acanthamoeba polyphaga mimivirus (APMV).